The sequence spans 354 residues: Glucose 1-dehydrogenase (354 aa).

The segment at 1 to 27 (MKVIGVTRDDDGPQLLERERPSPDPGE) is disordered. Residues 7-22 (TRDDDGPQLLERERPS) show a composition bias toward basic and acidic residues. Asp38 is a Zn(2+) binding site. Thr40 provides a ligand contact to substrate. His63 and Glu64 together coordinate Zn(2+). The interval 91 to 110 (PNGETNEYFRRGEPDMAPDG) is disordered. Positions 114 and 150 each coordinate substrate. Glu150 contacts Zn(2+). NADP(+)-binding positions include 181–184 (NGSL), 204–205 (RR), 269–271 (LGI), and 298–300 (TVN). Asn300 serves as a coordination point for substrate.

This sequence belongs to the zinc-containing alcohol dehydrogenase family. Glucose 1-dehydrogenase subfamily. Requires Zn(2+) as cofactor.

The enzyme catalyses D-glucose + NAD(+) = D-glucono-1,5-lactone + NADH + H(+). It catalyses the reaction D-glucose + NADP(+) = D-glucono-1,5-lactone + NADPH + H(+). Its function is as follows. Catalyzes the NAD(P)(+)-dependent oxidation of D-glucose to D-gluconate via gluconolactone. Can utilize both NAD(+) and NADP(+) as electron acceptor. Is involved in the degradation of glucose through a modified Entner-Doudoroff pathway. In Haloarcula marismortui (strain ATCC 43049 / DSM 3752 / JCM 8966 / VKM B-1809) (Halobacterium marismortui), this protein is Glucose 1-dehydrogenase.